The sequence spans 304 residues: Quinolinate synthase (304 aa).

The iminosuccinate site is built by H23 and S40. C86 lines the [4Fe-4S] cluster pocket. Iminosuccinate is bound by residues 112–114 (YVN) and S129. C173 provides a ligand contact to [4Fe-4S] cluster. Iminosuccinate-binding positions include 199–201 (HPE) and T216. Position 260 (C260) interacts with [4Fe-4S] cluster.

Belongs to the quinolinate synthase family. Type 2 subfamily. [4Fe-4S] cluster is required as a cofactor.

It localises to the cytoplasm. It carries out the reaction iminosuccinate + dihydroxyacetone phosphate = quinolinate + phosphate + 2 H2O + H(+). The protein operates within cofactor biosynthesis; NAD(+) biosynthesis; quinolinate from iminoaspartate: step 1/1. Functionally, catalyzes the condensation of iminoaspartate with dihydroxyacetone phosphate to form quinolinate. The protein is Quinolinate synthase of Methanothermobacter thermautotrophicus (strain ATCC 29096 / DSM 1053 / JCM 10044 / NBRC 100330 / Delta H) (Methanobacterium thermoautotrophicum).